We begin with the raw amino-acid sequence, 66 residues long: Movement protein TGBp3 (66 aa).

Residues 1–2 are Lumenal-facing; the sequence is MD. The chain crosses the membrane as a helical span at residues 3–23; sequence FTTLIIIGVYLLVFIVYFAKI. Residues 24-66 are Cytoplasmic-facing; the sequence is NTSVCTISISGASIEISGCDNPTLFEILPKLRPFNHGLSLPSN.

This sequence belongs to the Tymovirales TGBp3 protein family.

Its subcellular location is the host endoplasmic reticulum membrane. Its function is as follows. Plays a role in viral cell-to-cell propagation, by facilitating genome transport to neighboring plant cells through plasmosdesmata. May induce the formation of granular vesicles derived from the Endoplasmic reticulum, which align on actin filaments. In Trifolium (WCMV), this protein is Movement protein TGBp3.